Here is a 172-residue protein sequence, read N- to C-terminus: Shikimate kinase (172 aa).

Glycine 14–threonine 19 provides a ligand contact to ATP. Residue serine 18 participates in Mg(2+) binding. The substrate site is built by aspartate 36, arginine 60, and glycine 82. Position 120 (arginine 120) interacts with ATP. Arginine 140 is a substrate binding site.

It belongs to the shikimate kinase family. In terms of assembly, monomer. The cofactor is Mg(2+).

The protein resides in the cytoplasm. The enzyme catalyses shikimate + ATP = 3-phosphoshikimate + ADP + H(+). Its pathway is metabolic intermediate biosynthesis; chorismate biosynthesis; chorismate from D-erythrose 4-phosphate and phosphoenolpyruvate: step 5/7. Functionally, catalyzes the specific phosphorylation of the 3-hydroxyl group of shikimic acid using ATP as a cosubstrate. This chain is Shikimate kinase, found in Tolumonas auensis (strain DSM 9187 / NBRC 110442 / TA 4).